The primary structure comprises 109 residues: UPF0060 membrane protein RC1_3291 (109 aa).

A run of 4 helical transmembrane segments spans residues 4–24, 31–51, 59–79, and 88–108; these read IATYLLAAVAEIGGCFAFWAW, PLWLIPGMASLALFAWALTRI, AYAAYGGIYILTSLVWMWLVE, and TLGTVLCVSGALVIIFGPRGG.

The protein belongs to the UPF0060 family.

Its subcellular location is the cell inner membrane. This Rhodospirillum centenum (strain ATCC 51521 / SW) protein is UPF0060 membrane protein RC1_3291.